A 323-amino-acid polypeptide reads, in one-letter code: tRNA dimethylallyltransferase (323 aa).

12–19 is a binding site for ATP; sequence GPTAAGKT. Residue 14-19 coordinates substrate; it reads TAAGKT. Interaction with substrate tRNA regions lie at residues 37–40 and 161–165; these read DSAL and QRLIR.

The protein belongs to the IPP transferase family. Monomer. The cofactor is Mg(2+).

The catalysed reaction is adenosine(37) in tRNA + dimethylallyl diphosphate = N(6)-dimethylallyladenosine(37) in tRNA + diphosphate. Functionally, catalyzes the transfer of a dimethylallyl group onto the adenine at position 37 in tRNAs that read codons beginning with uridine, leading to the formation of N6-(dimethylallyl)adenosine (i(6)A). This Pseudomonas putida (strain ATCC 47054 / DSM 6125 / CFBP 8728 / NCIMB 11950 / KT2440) protein is tRNA dimethylallyltransferase.